A 426-amino-acid polypeptide reads, in one-letter code: Inhibin beta A chain (426 aa).

Residues 1–20 (MPLLWLRGFLLASCWIIVKS) form the signal peptide. The propeptide occupies 21–310 (SPTPGSEGHS…EDHPHRRRRR (290 aa)). Residue N165 is glycosylated (N-linked (GlcNAc...) asparagine). A compositionally biased stretch (polar residues) spans 177 to 186 (QQQKHPQGSS). Disordered regions lie at residues 177-201 (QQQK…MEER) and 260-291 (KKKK…SHRP). Over residues 263–275 (KEEEGEGKKKDGG) the composition is skewed to basic and acidic residues. Disulfide bonds link C314–C322, C321–C391, C350–C423, and C354–C425.

The protein belongs to the TGF-beta family. In terms of assembly, dimeric, linked by one or more disulfide bonds. Inhibin A is a dimer of alpha/INHA and beta-A/INHBA. Activin A is a homodimer of beta-A/INHBA. Activin AB is a dimer of beta-A/INHBA and beta-B/INHBB. Interacts with FST and FSTL3; these interactions prevent activin A interaction to its type II receptor. Activin A interacts with ACVR2A. Activin A interacts with BMPR2. Inhibin A interacts with ACVR1; this interaction creates a non-signaling complex (NSC) that inhibits ACVR1-mediated BMP signaling. Inhibin A interacts with ACVR2A.

The protein localises to the secreted. In terms of biological role, inhibins/activins are involved in regulating a number of diverse functions such as hypothalamic and pituitary hormone secretion, gonadal hormone secretion, germ cell development and maturation, erythroid differentiation, insulin secretion, nerve cell survival, embryonic axial development or bone growth, depending on their subunit composition. Activin A is a homodimer of INHBA that plays a role in several essential biological processes including embryonic development, stem cell maintenance and differentiation, haematopoiesis, cell proliferation and tissue fibrosis. Signals through type I (such as ACVR1B or ACVR1C) and type II receptors (such as ACVR2A, ACVR2B or BMPR2) which, upon ligand binding, phosphorylate SMAD2 and SMAD3 intracellular signaling mediators that form a complex with SMAD4, translocate to the nucleus and modulate gene expression. Can also activate alternative non-canonical intracellular signaling pathways including the p38 MAPK, extracellular signal-regulated kinases 1/2 (ERK1/2) and c-Jun N-terminal kinases (JNKs) to modulate cell migration and differentiation. Alternatively, promotes osteoblastic differentiation via ACVRL1-SMAD1/5/9 pathway. In addition, can engage the type I receptor ACVR1 to form an ACVR1-activin A-type II receptor non-signaling complex (NSC) that renders receptors unavailable for engagement with BMPs, hence resulting in an apparent inhibition of ACVR1-mediated BMP signaling. Functionally, inhibin A is a dimer of alpha/INHA and beta-A/INHBA that functions as a feedback regulator in the hypothalamic-pituitary-gonadal (HPG) axis. Inhibits the secretion of FSH from the anterior pituitary gland by acting on pituitary gonadotrope cells. Antagonizes activin A by binding to the proteoglycan, betaglycan, and forming a stable complex with and, thereby, sequestering type II activin receptors while excluding type I receptor. This Equus caballus (Horse) protein is Inhibin beta A chain (INHBA).